Here is a 168-residue protein sequence, read N- to C-terminus: Cytolysin secretion protein (168 aa).

This chain is Cytolysin secretion protein (vvhB), found in Vibrio vulnificus (strain CMCP6).